The sequence spans 692 residues: Elongation factor G (692 aa).

Positions 8-283 constitute a tr-type G domain; sequence NRIRNIGIAA…AVIDYLPAPT (276 aa). GTP-binding positions include 17–24, 81–85, and 135–138; these read AHIDAGKT, DTPGH, and NKMD.

The protein belongs to the TRAFAC class translation factor GTPase superfamily. Classic translation factor GTPase family. EF-G/EF-2 subfamily.

It localises to the cytoplasm. Its function is as follows. Catalyzes the GTP-dependent ribosomal translocation step during translation elongation. During this step, the ribosome changes from the pre-translocational (PRE) to the post-translocational (POST) state as the newly formed A-site-bound peptidyl-tRNA and P-site-bound deacylated tRNA move to the P and E sites, respectively. Catalyzes the coordinated movement of the two tRNA molecules, the mRNA and conformational changes in the ribosome. The polypeptide is Elongation factor G (Helicobacter acinonychis (strain Sheeba)).